Reading from the N-terminus, the 403-residue chain is Endophilin-B2 (403 aa).

Residues 1–27 (MDFNVKKLASDAGVFFSRAMQFTEEKL) form a membrane-binding amphipathic helix region. The region spanning 24–287 (EEKLGQAEKT…LGRFSGTFVG (264 aa)) is the BAR domain. Residues 210-233 (WSDEVEKAEHELRLTQTEFDRQAE) are a coiled coil. In terms of domain architecture, SH3 spans 343-403 (SGTRKARVLY…VPVTYLELLS (61 aa)).

This sequence belongs to the endophilin family. In terms of assembly, homodimer, and heterodimer with SH3GLB1.

The protein localises to the cytoplasm. This is Endophilin-B2 from Gallus gallus (Chicken).